The sequence spans 137 residues: Transcription antitermination protein NusB (137 aa).

This sequence belongs to the NusB family.

Functionally, involved in transcription antitermination. Required for transcription of ribosomal RNA (rRNA) genes. Binds specifically to the boxA antiterminator sequence of the ribosomal RNA (rrn) operons. The protein is Transcription antitermination protein NusB of Finegoldia magna (strain ATCC 29328 / DSM 20472 / WAL 2508) (Peptostreptococcus magnus).